A 222-amino-acid chain; its full sequence is N-(5'-phosphoribosyl)anthranilate isomerase (222 aa).

The protein belongs to the TrpF family.

The enzyme catalyses N-(5-phospho-beta-D-ribosyl)anthranilate = 1-(2-carboxyphenylamino)-1-deoxy-D-ribulose 5-phosphate. It functions in the pathway amino-acid biosynthesis; L-tryptophan biosynthesis; L-tryptophan from chorismate: step 3/5. The polypeptide is N-(5'-phosphoribosyl)anthranilate isomerase (Brucella abortus (strain S19)).